Here is a 1125-residue protein sequence, read N- to C-terminus: RGS domain-containing serine/threonine-protein kinase A (1125 aa).

4 disordered regions span residues 1–77 (MKTS…GGNK), 96–191 (RRNS…IVDD), 276–416 (GISP…NNTN), and 455–480 (YVGG…PAPE). Composition is skewed to low complexity over residues 7 to 30 (SSNS…NNNN) and 37 to 66 (SSKS…LSSG). The segment covering 121 to 136 (LDSKPPKPFDEKDDPI) has biased composition (basic and acidic residues). Composition is skewed to low complexity over residues 159–191 (QPQQ…IVDD) and 281–342 (NNNN…LNNS). Residues 343–361 (PRYLNSSSSPRSMQHLSSK) show a composition bias toward polar residues. Over residues 362 to 416 (ITTTTTTTTTTTTTTSDDNNGNTNNNISNNNNIINNSNNNSNSNNNNNNNINNTN) the composition is skewed to low complexity. Positions 487 to 603 (KFIETITDPT…ISSPFNPEWK (117 aa)) constitute an RGS domain. The span at 617-685 (TTTQPINNFN…NNSNGSNTSS (69 aa)) shows a compositional bias: low complexity. Disordered stretches follow at residues 617–710 (TTTQ…KERS) and 723–762 (NLSN…SNNN). Over residues 690–710 (ERLDNIKGNRERVDSNGKERS) the composition is skewed to basic and acidic residues. A compositionally biased stretch (low complexity) spans 723–735 (NLSNHSNSSSNSN). The span at 736 to 748 (GKDKDKDKDKNEN) shows a compositional bias: basic and acidic residues. Positions 749-762 (TTDNSNNNNNSNNN) are enriched in low complexity. Residues 842 to 1097 (VSIHKWIASG…YLESIIYPSV (256 aa)) enclose the Protein kinase domain. ATP contacts are provided by residues 848-856 (IASGSSGRV) and lysine 869. Aspartate 963 (proton acceptor) is an active-site residue.

It belongs to the protein kinase superfamily. TKL Ser/Thr protein kinase family. Post-translationally, autophosphorylated.

It localises to the cytoplasm. Its subcellular location is the cell membrane. The catalysed reaction is L-seryl-[protein] + ATP = O-phospho-L-seryl-[protein] + ADP + H(+). It carries out the reaction L-threonyl-[protein] + ATP = O-phospho-L-threonyl-[protein] + ADP + H(+). Its activity is regulated as follows. Up-regulated by cAMP. Its function is as follows. Serine/threonine kinase involved in negative regulation of chemotaxis. The sequence is that of RGS domain-containing serine/threonine-protein kinase A (rckA) from Dictyostelium discoideum (Social amoeba).